Here is a 364-residue protein sequence, read N- to C-terminus: Aminomethyltransferase (364 aa).

It belongs to the GcvT family. In terms of assembly, the glycine cleavage system is composed of four proteins: P, T, L and H.

The enzyme catalyses N(6)-[(R)-S(8)-aminomethyldihydrolipoyl]-L-lysyl-[protein] + (6S)-5,6,7,8-tetrahydrofolate = N(6)-[(R)-dihydrolipoyl]-L-lysyl-[protein] + (6R)-5,10-methylene-5,6,7,8-tetrahydrofolate + NH4(+). In terms of biological role, the glycine cleavage system catalyzes the degradation of glycine. This chain is Aminomethyltransferase, found in Shewanella piezotolerans (strain WP3 / JCM 13877).